A 732-amino-acid polypeptide reads, in one-letter code: Catalase-peroxidase (732 aa).

The tryptophyl-tyrosyl-methioninium (Trp-Tyr) (with M-246) cross-link spans 97 to 220 (WHSAGTYRTS…LAAVQMGLIY (124 aa)). The active-site Proton acceptor is the His-98. Positions 220–246 (YVNPEGPDGNPDPVAAGRDIRETFARM) form a cross-link, tryptophyl-tyrosyl-methioninium (Tyr-Met) (with W-97). His-261 lines the heme b pocket.

The protein belongs to the peroxidase family. Peroxidase/catalase subfamily. As to quaternary structure, homodimer or homotetramer. Requires heme b as cofactor. Post-translationally, formation of the three residue Trp-Tyr-Met cross-link is important for the catalase, but not the peroxidase activity of the enzyme.

It carries out the reaction H2O2 + AH2 = A + 2 H2O. The enzyme catalyses 2 H2O2 = O2 + 2 H2O. Bifunctional enzyme with both catalase and broad-spectrum peroxidase activity. The chain is Catalase-peroxidase from Chlorobium phaeobacteroides (strain DSM 266 / SMG 266 / 2430).